The primary structure comprises 143 residues: Holo-[acyl-carrier-protein] synthase (143 aa).

Residues D9 and E63 each contribute to the Mg(2+) site.

The protein belongs to the P-Pant transferase superfamily. AcpS family. Requires Mg(2+) as cofactor.

It localises to the cytoplasm. The enzyme catalyses apo-[ACP] + CoA = holo-[ACP] + adenosine 3',5'-bisphosphate + H(+). Its function is as follows. Transfers the 4'-phosphopantetheine moiety from coenzyme A to a Ser of acyl-carrier-protein. The polypeptide is Holo-[acyl-carrier-protein] synthase (Burkholderia mallei (strain NCTC 10247)).